Reading from the N-terminus, the 780-residue chain is Striatin (780 aa).

Residues 53 to 120 (LHFLQHEWAR…QERAKYHKLK (68 aa)) are a coiled coil. Positions 55–63 (FLQHEWARF) are caveolin-binding. The interval 124-150 (ELNQGDMKPPSYDSDEGNETEVQPQQN) is disordered. Ser-137 carries the post-translational modification Phosphoserine. The interval 149–166 (QNSQLMWKQGRQLLRQYL) is calmodulin-binding. Thr-225 bears the Phosphothreonine mark. 4 positions are modified to phosphoserine: Ser-227, Ser-229, Ser-245, and Ser-259. 2 disordered regions span residues 289–310 (DFLVTSEEGDNESRSAGDGTDW) and 365–387 (DELPSLQPSVGSPSRPSSSRLPE). The span at 299-310 (NESRSAGDGTDW) shows a compositional bias: basic and acidic residues. WD repeat units follow at residues 461-500 (SHFDGIRALAFHPIEPVLITASEDHTLKMWNLQKTAPAKK), 514-553 (AHKGPVLCVVMSSNGEQCYSGGTDGLIQGWNTTNPNIDPY), 567-606 (GHTDAVWGLAYSAAHQRLLSCSADGTLRLWNTTEVAPALS), 662-701 (NSSCQINRVISHPTLPISITAHEDRHIKFYDNNTGKLIHS), 704-743 (AHLEAVTSLAVDPNGLYLMSGSHDCSIRLWNLESKTCIQE), and 750-780 (KFEESIHDVAFHPSKCYIASAGADALAKVFV).

It belongs to the WD repeat striatin family. Part of the core of STRIPAK complexes composed of PP2A catalytic and scaffolding subunits, the striatins (PP2A regulatory subunits), the striatin-associated proteins MOB4, STRIP1 and STRIP2, PDCD10 and members of the STE20 kinases, such as STK24 and STK26. Interacts with CTTNBP2; this interaction may regulate dendritic spine distribution of STRN. Activation of glutamate receptors weakens the interaction with CTTNBP2. Preferentially expressed in brain.

The protein resides in the cytoplasm. It localises to the membrane. Its subcellular location is the cell projection. The protein localises to the dendritic spine. Calmodulin-binding scaffolding protein which is the center of the striatin-interacting phosphatase and kinase (STRIPAK) complexes. STRIPAK complexes have critical roles in protein (de)phosphorylation and are regulators of multiple signaling pathways including Hippo, MAPK, nuclear receptor and cytoskeleton remodeling. Different types of STRIPAK complexes are involved in a variety of biological processes such as cell growth, differentiation, apoptosis, metabolism and immune regulation. The chain is Striatin (STRN) from Homo sapiens (Human).